The chain runs to 338 residues: Acetylcholinesterase (338 aa).

Asn-8 is a glycosylation site (N-linked (GlcNAc...) asparagine). Ser-99 (acyl-ester intermediate) is an active-site residue. A disulfide bridge links Cys-153 with Cys-164. Glu-226 serves as the catalytic Charge relay system.

It belongs to the type-B carboxylesterase/lipase family.

The protein localises to the synapse. Its subcellular location is the secreted. It is found in the cell membrane. The catalysed reaction is acetylcholine + H2O = choline + acetate + H(+). In terms of biological role, terminates signal transduction at the neuromuscular junction by rapid hydrolysis of the acetylcholine released into the synaptic cleft. In Myxine glutinosa (Atlantic hagfish), this protein is Acetylcholinesterase (ache).